Here is a 466-residue protein sequence, read N- to C-terminus: Ferrochelatase-1, chloroplastic/mitochondrial (466 aa).

Residues 1 to 11 (MQATALSSGFN) are compositionally biased toward polar residues. A disordered region spans residues 1–23 (MQATALSSGFNPLTKRKDHRFPR). The N-terminal 35 residues, 1 to 35 (MQATALSSGFNPLTKRKDHRFPRSCSQRNSLSLIQ), are a transit peptide targeting the chloroplast and mitochondrion.

This sequence belongs to the ferrochelatase family. Expressed in roots, leaves, stems and flowers. Present in both leaves and roots.

Its subcellular location is the plastid. The protein resides in the chloroplast membrane. The protein localises to the chloroplast thylakoid membrane. It localises to the mitochondrion. The enzyme catalyses heme b + 2 H(+) = protoporphyrin IX + Fe(2+). It functions in the pathway porphyrin-containing compound metabolism; protoheme biosynthesis; protoheme from protoporphyrin-IX: step 1/1. Functionally, catalyzes the last step of heme biosynthesis by inserting ferrous iron into protoporphyrin IX to produce protoheme. Produces heme for photosynthetic cytochromes, but does not seem to be involved in stress responses. May be involved in wound-induced supply of heme to defensive hemoproteins outside plastids. Regulates the expression of photosynthesis-associated nuclear genes in undeveloped chloroplasts through production of heme. This chain is Ferrochelatase-1, chloroplastic/mitochondrial, found in Arabidopsis thaliana (Mouse-ear cress).